Reading from the N-terminus, the 167-residue chain is Crossover junction endodeoxyribonuclease RuvC (167 aa).

Catalysis depends on residues D11, E71, and D143. Mg(2+) is bound by residues D11, E71, and D143.

It belongs to the RuvC family. As to quaternary structure, homodimer which binds Holliday junction (HJ) DNA. The HJ becomes 2-fold symmetrical on binding to RuvC with unstacked arms; it has a different conformation from HJ DNA in complex with RuvA. In the full resolvosome a probable DNA-RuvA(4)-RuvB(12)-RuvC(2) complex forms which resolves the HJ. Mg(2+) serves as cofactor.

The protein resides in the cytoplasm. It carries out the reaction Endonucleolytic cleavage at a junction such as a reciprocal single-stranded crossover between two homologous DNA duplexes (Holliday junction).. Its function is as follows. The RuvA-RuvB-RuvC complex processes Holliday junction (HJ) DNA during genetic recombination and DNA repair. Endonuclease that resolves HJ intermediates. Cleaves cruciform DNA by making single-stranded nicks across the HJ at symmetrical positions within the homologous arms, yielding a 5'-phosphate and a 3'-hydroxyl group; requires a central core of homology in the junction. The consensus cleavage sequence is 5'-(A/T)TT(C/G)-3'. Cleavage occurs on the 3'-side of the TT dinucleotide at the point of strand exchange. HJ branch migration catalyzed by RuvA-RuvB allows RuvC to scan DNA until it finds its consensus sequence, where it cleaves and resolves the cruciform DNA. This Hyphomonas neptunium (strain ATCC 15444) protein is Crossover junction endodeoxyribonuclease RuvC.